Consider the following 570-residue polypeptide: Proline--tRNA ligase (570 aa).

It belongs to the class-II aminoacyl-tRNA synthetase family. ProS type 1 subfamily. In terms of assembly, homodimer.

It is found in the cytoplasm. The enzyme catalyses tRNA(Pro) + L-proline + ATP = L-prolyl-tRNA(Pro) + AMP + diphosphate. In terms of biological role, catalyzes the attachment of proline to tRNA(Pro) in a two-step reaction: proline is first activated by ATP to form Pro-AMP and then transferred to the acceptor end of tRNA(Pro). As ProRS can inadvertently accommodate and process non-cognate amino acids such as alanine and cysteine, to avoid such errors it has two additional distinct editing activities against alanine. One activity is designated as 'pretransfer' editing and involves the tRNA(Pro)-independent hydrolysis of activated Ala-AMP. The other activity is designated 'posttransfer' editing and involves deacylation of mischarged Ala-tRNA(Pro). The misacylated Cys-tRNA(Pro) is not edited by ProRS. In Clostridium acetobutylicum (strain ATCC 824 / DSM 792 / JCM 1419 / IAM 19013 / LMG 5710 / NBRC 13948 / NRRL B-527 / VKM B-1787 / 2291 / W), this protein is Proline--tRNA ligase.